We begin with the raw amino-acid sequence, 428 residues long: Somatostatin receptor type 3 (428 aa).

Residues 1-45 (MAAVTYPSSVPTTLDPGNASSAWPLDTSLGNASAGTSLAGLAVSG) lie on the Extracellular side of the membrane. 2 N-linked (GlcNAc...) asparagine glycosylation sites follow: asparagine 18 and asparagine 31. The helical transmembrane segment at 46-71 (ILISLVYLVVCVVGLLGNSLVIYVVL) threads the bilayer. Topologically, residues 72-81 (RHTSSPSVTS) are cytoplasmic. Residues 82 to 103 (VYILNLALADELFMLGLPFLAA) traverse the membrane as a helical segment. At 104–118 (QNALSYWPFGSLMCR) the chain is on the extracellular side. The cysteines at positions 117 and 192 are disulfide-linked. A helical membrane pass occupies residues 119-140 (LVMAVDGINQFTSIFCLTVMSV). Residues 141 to 162 (DRYLAVVHPTRSARWRTAPVAR) lie on the Cytoplasmic side of the membrane. A helical membrane pass occupies residues 163–182 (MVSAAVWVASAVVVLPVVVF). Over 183–206 (SGVPRGMSTCHMQWPEPAAAWRTA) the chain is Extracellular. A helical transmembrane segment spans residues 207–232 (FIIYTAALGFFGPLLVICLCYLLIVV). Residues 233–266 (KVRSTTRRVRAPSCQWVQAPACQRRRRSERRVTR) are Cytoplasmic-facing. The helical transmembrane segment at 267–288 (MVVAVVALFVLCWMPFYLLNIV) threads the bilayer. The Extracellular segment spans residues 289-302 (NVVCPLPEEPAFFG). A helical transmembrane segment spans residues 303–325 (LYFLVVALPYANSCANPILYGFL). At 326 to 428 (SYRFKQGFRR…GDKASTLSHL (103 aa)) the chain is on the cytoplasmic side. Phosphoserine is present on residues serine 341, serine 346, and serine 351. A disordered region spans residues 343 to 428 (RVRSQEPGSG…GDKASTLSHL (86 aa)). Threonine 357 carries the phosphothreonine modification. Positions 357–370 (TEEEEDEEEEERRE) are enriched in acidic residues. Positions 385–412 (RLSQIAQPGPSGQQQRPCTGTAKEQQLL) are enriched in polar residues.

The protein belongs to the G-protein coupled receptor 1 family. Homodimer and heterodimer with SSTR2. Heterodimerization with SSTR2 inactivates SSTR3 receptor function. Phosphorylated. Phosphorylation increases upon somatostatin binding. In terms of tissue distribution, densely expressed in cerebellum and at moderate levels in the amygdala, cortex, striatum, spleen, liver and pituitary.

It is found in the cell membrane. In terms of biological role, receptor for somatostatin-14 and -28. This receptor is coupled via pertussis toxin sensitive G proteins to inhibition of adenylyl cyclase. The sequence is that of Somatostatin receptor type 3 (Sstr3) from Rattus norvegicus (Rat).